The primary structure comprises 483 residues: 3-isopropylmalate dehydratase large subunit (483 aa).

[4Fe-4S] cluster is bound by residues Cys-361, Cys-424, and Cys-427.

The protein belongs to the aconitase/IPM isomerase family. LeuC type 1 subfamily. In terms of assembly, heterodimer of LeuC and LeuD. Requires [4Fe-4S] cluster as cofactor.

The catalysed reaction is (2R,3S)-3-isopropylmalate = (2S)-2-isopropylmalate. The protein operates within amino-acid biosynthesis; L-leucine biosynthesis; L-leucine from 3-methyl-2-oxobutanoate: step 2/4. In terms of biological role, catalyzes the isomerization between 2-isopropylmalate and 3-isopropylmalate, via the formation of 2-isopropylmaleate. The protein is 3-isopropylmalate dehydratase large subunit of Polaromonas naphthalenivorans (strain CJ2).